Reading from the N-terminus, the 459-residue chain is Argininosuccinate lyase (459 aa).

The protein belongs to the lyase 1 family. Argininosuccinate lyase subfamily.

The protein localises to the cytoplasm. The enzyme catalyses 2-(N(omega)-L-arginino)succinate = fumarate + L-arginine. Its pathway is amino-acid biosynthesis; L-arginine biosynthesis; L-arginine from L-ornithine and carbamoyl phosphate: step 3/3. The protein is Argininosuccinate lyase of Sulfurihydrogenibium sp. (strain YO3AOP1).